Consider the following 226-residue polypeptide: Clarin-3 (226 aa).

A helical transmembrane segment spans residues 8 to 28 (LMFLSGFLTSLGSVVVICSIL). N-linked (GlcNAc...) asparagine glycans are attached at residues asparagine 46 and asparagine 83. The next 3 membrane-spanning stretches (helical) occupy residues 92-112 (VVII…MFTF), 128-148 (GVYT…VLFV), and 181-201 (FWLI…IIFY).

Belongs to the clarin family.

The protein resides in the membrane. This chain is Clarin-3 (Clrn3), found in Rattus norvegicus (Rat).